A 2377-amino-acid chain; its full sequence is DNA (cytosine-5-)-methyltransferase DMT5 (2377 aa).

Residues 24 to 56 form a disordered region; sequence GTADGAVNGGNIPNSQSQKRKRASPSPEIESEE. The Chromo; shadow subtype domain occupies 62-126; that stretch reads YEIDYIADSR…KNPGKPRLSP (65 aa). The tract at residues 150–282 is disordered; sequence GKSRAASSTD…KSSLPKAKLR (133 aa). Basic residues predominate over residues 201–213; it reads PTSKKVHPNKKCK. Acidic residues-rich tracts occupy residues 217–238 and 245–263; these read DDES…DDND and EDDE…ESDE. A compositionally biased stretch (basic residues) spans 268-282; it reads PAKKTKSSLPKAKLR. The 407-residue stretch at 347–753 folds into the SAM-dependent MTase C5-type domain; the sequence is LRVATMCSGT…IAALKVACHK (407 aa). Cysteine 440 is an active-site residue. In terms of domain architecture, Helicase ATP-binding spans 1450 to 1771; sequence AERPVMVRGG…RSIATFMGIH (322 aa). 1463-1470 serves as a coordination point for ATP; the sequence is DQVGYGKT. Disordered regions lie at residues 1642–1680, 2313–2334, and 2347–2377; these read KGQA…ENSK, KGRG…TVKS, and SSFR…SDII. Residues 1645–1669 show a composition bias toward basic and acidic residues; that stretch reads AYRDKHDSDSKAKPITKEELERWEA. Residues 2152–2315 enclose the Helicase C-terminal domain; it reads KLEHLVNLIH…EIPQEEYKGR (164 aa). Over residues 2317–2334 the composition is skewed to polar residues; it reads SSISMTNEKRTPTLTVKS. Residues 2363-2377 are compositionally biased toward acidic residues; sequence GVSDDDENSELSDII.

It in the N-terminal section; belongs to the class I-like SAM-binding methyltransferase superfamily. C5-methyltransferase family. In the C-terminal section; belongs to the SNF2/RAD54 helicase family. In terms of assembly, interacts with SWI6. It depends on Mg(2+) as a cofactor.

Its subcellular location is the nucleus. The protein localises to the chromosome. It catalyses the reaction a 2'-deoxycytidine in DNA + S-adenosyl-L-methionine + ATP + H2O = a 5-methyl-2'-deoxycytidine in DNA + S-adenosyl-L-homocysteine + ADP + phosphate + 2 H(+). Hemimethylated DNA substrates stimulate ATP hydrolysis and this is a prerequisite for methyltransferase activity. In terms of biological role, ATP-dependent cytosine methylase that maintains DNA methylation by acting at hemimethylated palindromic 5'-CG-3' sites to produce symmetrically methylated DNA strands. DNA methylation may play a role in transcriptional silencing, particularly at transposable elements. The chain is DNA (cytosine-5-)-methyltransferase DMT5 from Cryptococcus neoformans var. grubii serotype A (strain H99 / ATCC 208821 / CBS 10515 / FGSC 9487) (Filobasidiella neoformans var. grubii).